A 1134-amino-acid polypeptide reads, in one-letter code: Envelopment polyprotein (1134 aa).

Residues methionine 1–threonine 18 form the signal peptide. The Lumenal segment spans residues leucine 19 to leucine 487. 8 cysteine pairs are disulfide-bonded: cysteine 29–cysteine 151, cysteine 63–cysteine 157, cysteine 109–cysteine 128, cysteine 133–cysteine 138, cysteine 175–cysteine 185, cysteine 210–cysteine 247, cysteine 234–cysteine 351, and cysteine 380–cysteine 389. The N-linked (GlcNAc...) asparagine; by host glycan is linked to asparagine 134. N-linked (GlcNAc...) asparagine; by host glycans are attached at residues asparagine 235 and asparagine 347. N-linked (GlcNAc...) asparagine; by host glycosylation is present at asparagine 399. 2 disulfides stabilise this stretch: cysteine 405/cysteine 424 and cysteine 452/cysteine 475. A helical transmembrane segment spans residues leucine 488–isoleucine 508. Topologically, residues leucine 509 to cysteine 627 are cytoplasmic. A binding to the ribonucleoprotein region spans residues phenylalanine 516 to lysine 533. CCHC-type zinc fingers lie at residues cysteine 545–cysteine 565 and cysteine 570–cysteine 591. 3 binding to the ribonucleoprotein regions span residues tyrosine 588–valine 605, glutamine 592–lysine 603, and threonine 611–serine 625. The ITAM domain maps to threonine 611 to isoleucine 634. The short motif at tyrosine 615 to leucine 618 is the YxxL element. A helical membrane pass occupies residues tyrosine 628–alanine 648. At serine 649 to asparagine 1104 the chain is on the lumenal side. 7 cysteine pairs are disulfide-bonded: cysteine 734/cysteine 769, cysteine 738/cysteine 776, cysteine 750/cysteine 884, cysteine 764/cysteine 895, cysteine 779/cysteine 903, cysteine 805/cysteine 814, and cysteine 822/cysteine 831. The fusion loop stretch occupies residues tyrosine 756 to cysteine 776. Asparagine 927 carries N-linked (GlcNAc...) asparagine; by host glycosylation. 5 disulfide bridges follow: cysteine 969–cysteine 999, cysteine 992–cysteine 1044, cysteine 1009–cysteine 1014, cysteine 1045–cysteine 1050, and cysteine 1084–cysteine 1088. Residues tryptophan 1105–leucine 1125 traverse the membrane as a helical segment. The binding to the ribonucleoprotein stretch occupies residues leucine 1121–serine 1134. At cysteine 1126–serine 1134 the chain is on the cytoplasmic side.

The protein belongs to the hantavirus envelope glycoprotein family. In terms of assembly, homodimer. Homotetramer; forms heterotetrameric Gn-Gc spikes in the pre-fusion conformation. Interacts (via C-terminus) with the nucleoprotein. Interacts with host TUFM; this interaction contributes to the virus-induced degradation of mitochondria by autophagy, which leads to degradation of host MAVS and inhibition of type I interferon (IFN) responses. Interacts with host MAP1LC3B; this interaction contributes to the virus-induced degradation of mitochondria by autophagy, which leads to degradation of host MAVS and inhibition of type I interferon (IFN) responses. As to quaternary structure, homodimer. Homotetramer; forms heterotetrameric Gn-Gc spikes in the pre-fusion conformation. Homotrimer; forms homotrimer in the post-fusion conformation at acidic pH. Interacts (via C-terminus) with the nucleoprotein. In terms of processing, envelope polyprotein precursor is quickly cleaved in vivo just after synthesis, presumably by host signal peptidase.

The protein localises to the virion membrane. Its subcellular location is the host cell surface. It is found in the host Golgi apparatus membrane. It localises to the host endoplasmic reticulum membrane. The protein resides in the host mitochondrion. Functionally, forms homotetramers with glycoprotein C at the surface of the virion. Attaches the virion to host cell receptors including integrin ITGAV/ITGB3. This attachment induces virion internalization predominantly through clathrin-dependent endocytosis. May also bind to host C1QBP for virus entry into the host cell. Mediates the assembly and budding of infectious virus particles through its interaction with the nucleocapsid protein and the viral genome. May dysregulate normal immune and endothelial cell responses through an ITAM motif. Translocates to mitochondria, binds to host TUFM and recruits MAP1LC3B. These interactions induce mitochondrial autophagy and therefore destruction of host MAVS leading to inhibition of type I interferon (IFN) responses. Concomitant breakdown of glycoprotein N is apparently prevented by the nucleoprotein that may inhibit Gn-stimulated autophagosome-lysosome fusion. Interacts with the viral genomic RNA. In terms of biological role, forms homotetramers with glycoprotein N at the surface of the virion. Attaches the virion to host cell receptors including integrin ITGAV/ITGB3. This attachment induces virion internalization predominantly through clathrin-dependent endocytosis. May also bind to host C1QBP for virus entry into the host cell. Class II fusion protein that promotes fusion of viral membrane with host endosomal membrane after endocytosis of the virion. The polypeptide is Envelopment polyprotein (GP) (Apodemus agrarius (Eurasian field mouse)).